The sequence spans 124 residues: Fluoride-specific ion channel FluC (124 aa).

Transmembrane regions (helical) follow at residues 36–56, 63–83, and 99–119; these read VGTM…VVVL, YAPF…AFSL, and AYVG…MAAV. Positions 73 and 76 each coordinate Na(+).

It belongs to the fluoride channel Fluc/FEX (TC 1.A.43) family.

The protein resides in the cell inner membrane. It catalyses the reaction fluoride(in) = fluoride(out). Na(+) is not transported, but it plays an essential structural role and its presence is essential for fluoride channel function. Its function is as follows. Fluoride-specific ion channel. Important for reducing fluoride concentration in the cell, thus reducing its toxicity. In Cereibacter sphaeroides (strain ATCC 17029 / ATH 2.4.9) (Rhodobacter sphaeroides), this protein is Fluoride-specific ion channel FluC.